Reading from the N-terminus, the 143-residue chain is Heat shock protein Hsp-16.48/Hsp-16.49 (143 aa).

One can recognise a sHSP domain in the interval 35–140; the sequence is HNSFNFSDNI…SSRSIPINFV (106 aa).

Belongs to the small heat shock protein (HSP20) family.

This is Heat shock protein Hsp-16.48/Hsp-16.49 (hsp-16.48) from Caenorhabditis elegans.